The primary structure comprises 515 residues: Adenine DNA glycosylase (515 aa).

Over residues 1-24 (MKKLQASVRSHKKQPANHKRRRTR) the composition is skewed to basic residues. The segment at 1–38 (MKKLQASVRSHKKQPANHKRRRTRALSSSQAKPSSLDG) is disordered. The active-site Proton donor/acceptor is Glu-105. [4Fe-4S] cluster-binding residues include Cys-261, Cys-268, Cys-271, and Cys-277. Positions 335–466 (PREEYSATCV…AMKKVFRMYE (132 aa)) constitute a Nudix hydrolase domain. The Nudix box motif lies at 376 to 398 (VTLEPSEQHQHKALLQELQRWCG). The disordered stretch occupies residues 468 to 494 (HRQGTRKGSKRSQVCPPSSRKKPSLGQ).

This sequence belongs to the Nth/MutY family. It depends on [4Fe-4S] cluster as a cofactor. As to expression, expressed in heart, lung, liver, intestine, brain and thymus.

The protein resides in the nucleus. Its subcellular location is the mitochondrion. It carries out the reaction Hydrolyzes free adenine bases from 7,8-dihydro-8-oxoguanine:adenine mismatched double-stranded DNA, leaving an apurinic site.. Its function is as follows. Involved in oxidative DNA damage repair. Initiates repair of A*oxoG to C*G by removing the inappropriately paired adenine base from the DNA backbone. Possesses both adenine and 2-OH-A DNA glycosylase activities. The protein is Adenine DNA glycosylase (Mutyh) of Mus musculus (Mouse).